A 304-amino-acid chain; its full sequence is Ribosome-inactivating protein 9 (304 aa).

Glu208 is an active-site residue.

This sequence belongs to the ribosome-inactivating protein family. Type 1 RIP subfamily. In terms of assembly, monomer. As to expression, accumulates to high levels in seeds.

The protein localises to the cytoplasm. It catalyses the reaction Endohydrolysis of the N-glycosidic bond at one specific adenosine on the 28S rRNA.. Its function is as follows. Possesses features of some constitutive defense agent. The coordinate Opaque-2-controlled synthesis of this protein and the major seed storage proteins (zeins) may provide the germinating seedling with both nutritional benefits and protection against pathogen invasion of the surrounding endosperm. The sequence is that of Ribosome-inactivating protein 9 (CRIP9) from Zea mays (Maize).